Here is a 147-residue protein sequence, read N- to C-terminus: MAKEITGYVKLQIKGGAANPSPPVGPALGSKGLNIMEFCKQFNARTQDKPGVLLPVLITVYTDKSFDFVVKTPPAAILLAEAAKIKKGSAEPNRVKVGSVNWDQIRTIAETKMPDLNAFKIESAMKMVAGTARSMGLTVSGKAPWEN.

It belongs to the universal ribosomal protein uL11 family. As to quaternary structure, part of the ribosomal stalk of the 50S ribosomal subunit. Interacts with L10 and the large rRNA to form the base of the stalk. L10 forms an elongated spine to which L12 dimers bind in a sequential fashion forming a multimeric L10(L12)X complex. Post-translationally, one or more lysine residues are methylated.

Functionally, forms part of the ribosomal stalk which helps the ribosome interact with GTP-bound translation factors. This is Large ribosomal subunit protein uL11 from Cytophaga hutchinsonii (strain ATCC 33406 / DSM 1761 / CIP 103989 / NBRC 15051 / NCIMB 9469 / D465).